The chain runs to 124 residues: Small ribosomal subunit protein bS6 (124 aa).

The disordered stretch occupies residues 99-124 (PLPAPRIVPGSEPEPVEQQEAAAVEA). Low complexity predominate over residues 114 to 124 (VEQQEAAAVEA).

This sequence belongs to the bacterial ribosomal protein bS6 family.

In terms of biological role, binds together with bS18 to 16S ribosomal RNA. This is Small ribosomal subunit protein bS6 from Prochlorococcus marinus (strain MIT 9303).